A 1141-amino-acid polypeptide reads, in one-letter code: Translocase of chloroplast 125, chloroplastic (1141 aa).

Disordered stretches follow at residues Met-1 to Tyr-177 and Gly-325 to Glu-431. Composition is skewed to basic and acidic residues over residues Arg-57 to Gly-72 and Ile-107 to Leu-121. The segment covering Tyr-132–Glu-150 has biased composition (acidic residues). The span at Ser-151 to Asn-167 shows a compositional bias: low complexity. A compositionally biased stretch (acidic residues) spans Glu-328–Ile-353. Composition is skewed to low complexity over residues Arg-389 to Thr-401 and Thr-408 to Ala-429. The region spanning Asp-505–Lys-734 is the AIG1-type G domain. The tract at residues Gly-514–Ser-521 is G1. A GTP-binding site is contributed by Gly-517 to Ala-522. Ser-521 contributes to the Mg(2+) binding site. The G2 stretch occupies residues Ser-541 to Val-545. The segment at Asp-561–Gly-564 is G3. The segment at Thr-633–Ser-636 is G4. GTP is bound by residues His-634 and Glu-682–Asn-683. Positions Glu-682–His-684 are G5. Disordered stretches follow at residues Gln-758–Pro-795 and Ile-832–Met-871. Over residues Glu-770–Asp-789 the composition is skewed to acidic residues. Residues Ile-832–Gln-841 are compositionally biased toward basic residues. Residues Met-1116–Gly-1136 form a helical membrane-spanning segment.

Belongs to the TRAFAC class TrmE-Era-EngA-EngB-Septin-like GTPase superfamily. AIG1/Toc34/Toc159-like paraseptin GTPase family. TOC159 subfamily. Part of the TOC core complex. The cofactor is Mg(2+).

Its subcellular location is the plastid. The protein resides in the chloroplast outer membrane. In terms of biological role, GTPase involved in protein precursor import into chloroplasts. Seems to recognize chloroplast-destined precursor proteins and regulate their presentation to the translocation channel through GTP hydrolysis. Probably specialized in the import of nuclear encoded non-photosynthetic preproteins from the cytoplasm to the chloroplast. This Physcomitrium patens (Spreading-leaved earth moss) protein is Translocase of chloroplast 125, chloroplastic.